A 340-amino-acid polypeptide reads, in one-letter code: MLEAPGPSDGCELSNPSASRVSCAGQMLEVQPGLYFGGAAAVAEPDHLREAGITAVLTVDSEEPSFKAGPGVEDLWRLFVPALDKPETDLLSHLDRCVAFIGQARAEGRAVLVHCHAGVSRSVAIITAFLMKTDQLPFEKAYEKLQILKPEAKMNEGFEWQLKLYQAMGYEVDTSSAIYKQYRLQKVTEKYPELQNLPQELFAVDPTTVSQGLKDEVLYKCRKCRRSLFRSSSILDHREGSGPIAFAHKRMTPSSMLTTGRQAQCTSYFIEPVQWMESALLGVMDGQLLCPKCSAKLGSFNWYGEQCSCGRWITPAFQIHKNRVDEMKILPVLGSQTGKI.

An N-acetylmethionine modification is found at Met-1. The region spanning 26–171 is the Tyrosine-protein phosphatase domain; the sequence is QMLEVQPGLY…LKLYQAMGYE (146 aa). The Phosphocysteine intermediate role is filled by Cys-115. 116 to 121 is a binding site for substrate; sequence HAGVSR. Ser-335 is modified (phosphoserine).

This sequence belongs to the protein-tyrosine phosphatase family. Non-receptor class dual specificity subfamily. As to quaternary structure, monomer. It depends on Zn(2+) as a cofactor. Ubiquitous, highest expression in spleen, testis, ovary, and peripheral blood leukocytes and lower expression in liver and lung.

The protein localises to the nucleus. It localises to the cytoplasm. The protein resides in the cytosol. The catalysed reaction is O-phospho-L-tyrosyl-[protein] + H2O = L-tyrosyl-[protein] + phosphate. It carries out the reaction O-phospho-L-seryl-[protein] + H2O = L-seryl-[protein] + phosphate. The enzyme catalyses O-phospho-L-threonyl-[protein] + H2O = L-threonyl-[protein] + phosphate. In terms of biological role, dual specificity phosphatase; can dephosphorylate both phosphotyrosine and phosphoserine or phosphothreonine residues. Can dephosphorylate glucokinase (in vitro). Has phosphatase activity with the synthetic substrate 6,8-difluoro-4-methylumbelliferyl phosphate and other in vitro substrates. This chain is Dual specificity protein phosphatase 12 (DUSP12), found in Homo sapiens (Human).